The sequence spans 303 residues: GGSCGQCRVEVHSGGGDILPTEEGHINKREAKSGCRLACQVAVKQDMEIEVEDEIFGVQQWECEVISNDNQATFIKELKLQIPNGESVPFKAGGYIQIEAPAHHVKYKDFDIDEQYKGDWNHFGFFDVESKVDEPTLRAYSMANYPEEEGIIMLNVRIATPPPGRLHLPAGKMSSFIFSLKEGDKVTISGPFGEFFAKETDNEMVFIGGGAGMAPMRSHIFDQLKRLQSKRKMSFWYGARSKREMFYEDDYNGLAADNDNFQWHVALSDPQPEDNWEGMTGFIHNVLFEEYLKDHEAPEDCEY.

One can recognise a 2Fe-2S ferredoxin-type domain in the interval 1–45 (GGSCGQCRVEVHSGGGDILPTEEGHINKREAKSGCRLACQVAVKQ). Cysteine 4, cysteine 7, and cysteine 39 together coordinate [2Fe-2S] cluster. One can recognise an FAD-binding FR-type domain in the interval 58 to 198 (VQQWECEVIS…SGPFGEFFAK (141 aa)). A catalytic region spans residues 201 to 303 (DNEMVFIGGG…DHEAPEDCEY (103 aa)).

This sequence belongs to the NqrF family. As to quaternary structure, composed of six subunits; NqrA, NqrB, NqrC, NqrD, NqrE and NqrF. [2Fe-2S] cluster serves as cofactor. FAD is required as a cofactor.

The protein resides in the cell inner membrane. The catalysed reaction is a ubiquinone + n Na(+)(in) + NADH + H(+) = a ubiquinol + n Na(+)(out) + NAD(+). In terms of biological role, NQR complex catalyzes the reduction of ubiquinone-1 to ubiquinol by two successive reactions, coupled with the transport of Na(+) ions from the cytoplasm to the periplasm. The first step is catalyzed by NqrF, which accepts electrons from NADH and reduces ubiquinone-1 to ubisemiquinone by a one-electron transfer pathway. This chain is Na(+)-translocating NADH-quinone reductase subunit F (nqrF), found in Colwellia psychrerythraea (Vibrio psychroerythus).